The primary structure comprises 253 residues: Imidazole glycerol phosphate synthase subunit HisF (253 aa).

Catalysis depends on residues aspartate 11 and aspartate 130.

It belongs to the HisA/HisF family. In terms of assembly, heterodimer of HisH and HisF.

It is found in the cytoplasm. The enzyme catalyses 5-[(5-phospho-1-deoxy-D-ribulos-1-ylimino)methylamino]-1-(5-phospho-beta-D-ribosyl)imidazole-4-carboxamide + L-glutamine = D-erythro-1-(imidazol-4-yl)glycerol 3-phosphate + 5-amino-1-(5-phospho-beta-D-ribosyl)imidazole-4-carboxamide + L-glutamate + H(+). It participates in amino-acid biosynthesis; L-histidine biosynthesis; L-histidine from 5-phospho-alpha-D-ribose 1-diphosphate: step 5/9. IGPS catalyzes the conversion of PRFAR and glutamine to IGP, AICAR and glutamate. The HisF subunit catalyzes the cyclization activity that produces IGP and AICAR from PRFAR using the ammonia provided by the HisH subunit. The protein is Imidazole glycerol phosphate synthase subunit HisF of Geobacter metallireducens (strain ATCC 53774 / DSM 7210 / GS-15).